A 324-amino-acid polypeptide reads, in one-letter code: dITP/XTP pyrophosphatase (324 aa).

Positions 1–127 (MTKTIFESKT…KNDNNFGDTI (127 aa)) are unknown. Positions 128–324 (LIATHNEGKT…EVFPKWQLEN (197 aa)) are NTP pyrophosphatase. 131–136 (THNEGK) lines the substrate pocket. Residues E164 and D193 each coordinate Mg(2+). Catalysis depends on D193, which acts as the Proton acceptor. Substrate is bound by residues S194, 277 to 280 (FGYD), K300, and 305 to 306 (HR).

It belongs to the HAM1 NTPase family. Homodimer. It depends on Mg(2+) as a cofactor.

It catalyses the reaction XTP + H2O = XMP + diphosphate + H(+). It carries out the reaction dITP + H2O = dIMP + diphosphate + H(+). The enzyme catalyses ITP + H2O = IMP + diphosphate + H(+). Its function is as follows. Pyrophosphatase that catalyzes the hydrolysis of nucleoside triphosphates to their monophosphate derivatives, with a high preference for the non-canonical purine nucleotides XTP (xanthosine triphosphate), dITP (deoxyinosine triphosphate) and ITP. Seems to function as a house-cleaning enzyme that removes non-canonical purine nucleotides from the nucleotide pool, thus preventing their incorporation into DNA/RNA and avoiding chromosomal lesions. In Streptococcus agalactiae serotype III (strain NEM316), this protein is dITP/XTP pyrophosphatase.